The chain runs to 570 residues: La-related protein 7 (570 aa).

Met1 carries the post-translational modification N-acetylmethionine. The segment covering Met1 to Lys16 has biased composition (basic and acidic residues). Disordered regions lie at residues Met1–Arg24 and Leu180–Lys364. The region spanning Arg22–Glu116 is the HTH La-type RNA-binding domain. In terms of domain architecture, RRM spans Arg119 to Thr197. Basic residues predominate over residues Lys213–Ile222. Lys231 participates in a covalent cross-link: Glycyl lysine isopeptide (Lys-Gly) (interchain with G-Cter in SUMO2). Residue Thr251 is modified to Phosphothreonine. 2 positions are modified to phosphoserine: Ser253 and Ser256. Position 260 is a phosphothreonine (Thr260). Basic and acidic residues predominate over residues Arg286–Ala295. Phosphoserine occurs at positions 294 and 334. Thr335 is modified (phosphothreonine). Basic and acidic residues predominate over residues Glu340 to Ser349. Phosphoserine is present on Ser347. Over residues Lys350–His363 the composition is skewed to basic residues. Lys406 participates in a covalent cross-link: Glycyl lysine isopeptide (Lys-Gly) (interchain with G-Cter in SUMO2). The region spanning Gln438–Lys551 is the xRRM domain.

The protein belongs to the LARP7 family. Core component of the 7SK RNP complex, at least composed of 7SK RNA, LARP7, MEPCE, HEXIM1 (or HEXIM2) and P-TEFb (composed of CDK9 and CCNT1/cyclin-T1). Interacts with METTL16. Interacts with RBM7; upon genotoxic stress this interaction is enhanced, triggering the release of inactive P-TEFb complex from the core, yielding to P-TEFb complex activation. Associates with box C/D small nucleolar ribonucleoprotein (snoRNP) complexes.

Its subcellular location is the nucleus. The protein resides in the nucleoplasm. RNA-binding protein that specifically binds distinct small nuclear RNA (snRNAs) and regulates their processing and function. Specifically binds the 7SK snRNA (7SK RNA) and acts as a core component of the 7SK ribonucleoprotein (RNP) complex, thereby acting as a negative regulator of transcription elongation by RNA polymerase II. The 7SK RNP complex sequesters the positive transcription elongation factor b (P-TEFb) in a large inactive 7SK RNP complex preventing RNA polymerase II phosphorylation and subsequent transcriptional elongation. The 7SK RNP complex also promotes snRNA gene transcription by RNA polymerase II via interaction with the little elongation complex (LEC). LARP7 specifically binds to the highly conserved 3'-terminal U-rich stretch of 7SK RNA; on stimulation, remains associated with 7SK RNA, whereas P-TEFb is released from the complex. LARP7 also acts as a regulator of mRNA splicing fidelity by promoting U6 snRNA processing. Specifically binds U6 snRNAs and associates with a subset of box C/D RNP complexes: promotes U6 snRNA 2'-O-methylation by facilitating U6 snRNA loading into box C/D RNP complexes. U6 snRNA 2'-O-methylation is required for mRNA splicing fidelity. Binds U6 snRNAs with a 5'-CAGGG-3' sequence motif. U6 snRNA processing is required for spermatogenesis. This chain is La-related protein 7, found in Mus musculus (Mouse).